The chain runs to 324 residues: Glyoxylate/hydroxypyruvate reductase B (324 aa).

Residues arginine 237 and glutamate 266 contribute to the active site. Histidine 285 acts as the Proton donor in catalysis.

The protein belongs to the D-isomer specific 2-hydroxyacid dehydrogenase family. GhrB subfamily. Homodimer.

Its subcellular location is the cytoplasm. It catalyses the reaction glycolate + NADP(+) = glyoxylate + NADPH + H(+). It carries out the reaction (R)-glycerate + NAD(+) = 3-hydroxypyruvate + NADH + H(+). The enzyme catalyses (R)-glycerate + NADP(+) = 3-hydroxypyruvate + NADPH + H(+). In terms of biological role, catalyzes the NADPH-dependent reduction of glyoxylate and hydroxypyruvate into glycolate and glycerate, respectively. The chain is Glyoxylate/hydroxypyruvate reductase B from Citrobacter koseri (strain ATCC BAA-895 / CDC 4225-83 / SGSC4696).